The following is a 160-amino-acid chain: Protransforming growth factor alpha (160 aa).

Positions 1 to 23 are cleaved as a signal peptide; that stretch reads MVPSAGQFALFALGILLAVCQAL. Positions 24 to 39 are cleaved as a propeptide — removed in mature form; that stretch reads ENSTSALSADPPIAAA. At 24 to 98 the chain is on the extracellular side; it reads ENSTSALSAD…AVVAASQKKQ (75 aa). A glycan (N-linked (GlcNAc...) asparagine) is linked at asparagine 25. Positions 43-83 constitute an EGF-like domain; that stretch reads HFNDCPDSHSQFCFHGTCRFLVQEDKPACVCHSGYVGARCE. 3 disulfide bridges follow: cysteine 47–cysteine 60, cysteine 55–cysteine 71, and cysteine 73–cysteine 82. Residues 90 to 160 constitute a propeptide, removed in mature form; the sequence is VVAASQKKQA…TACCHSETVV (71 aa). Residues 99-124 form a helical membrane-spanning segment; sequence AITALVVVSIVALAVLIITCVLIHCC. The Cytoplasmic segment spans residues 125 to 160; sequence QVRKHCEWCRALICRHEKPSALLKGRTACCHSETVV. 2 S-palmitoyl cysteine lipidation sites follow: cysteine 153 and cysteine 154.

In terms of assembly, interacts with the PDZ domains of MAGI3, SDCBP and SNTA1. The interaction with SDCBP, is required for the targeting to the cell surface. In the endoplasmic reticulum, in its immature form (i.e. with a prosegment and lacking full N-glycosylation), interacts with CNIH. In the Golgi apparatus, may form a complex with CNIH and GORASP2. Interacts (via cytoplasmic C-terminal domain) with NKD2.

It is found in the secreted. The protein resides in the extracellular space. It localises to the cell membrane. Functionally, TGF alpha is a mitogenic polypeptide that is able to bind to the EGF receptor/EGFR and to act synergistically with TGF beta to promote anchorage-independent cell proliferation in soft agar. The sequence is that of Protransforming growth factor alpha (TGFA) from Sus scrofa (Pig).